The primary structure comprises 475 residues: Ribulose bisphosphate carboxylase large chain (475 aa).

Positions 1-2 (MS) are excised as a propeptide. At Pro3 the chain carries N-acetylproline. Lys14 carries the N6,N6,N6-trimethyllysine modification. Substrate is bound by residues Asn123 and Thr173. The active-site Proton acceptor is the Lys175. Lys177 provides a ligand contact to substrate. Mg(2+) contacts are provided by Lys201, Asp203, and Glu204. Position 201 is an N6-carboxylysine (Lys201). Catalysis depends on His294, which acts as the Proton acceptor. 3 residues coordinate substrate: Arg295, His327, and Ser379.

The protein belongs to the RuBisCO large chain family. Type I subfamily. As to quaternary structure, heterohexadecamer of 8 large chains and 8 small chains; disulfide-linked. The disulfide link is formed within the large subunit homodimers. Requires Mg(2+) as cofactor. Post-translationally, the disulfide bond which can form in the large chain dimeric partners within the hexadecamer appears to be associated with oxidative stress and protein turnover.

Its subcellular location is the plastid. It localises to the chloroplast. It carries out the reaction 2 (2R)-3-phosphoglycerate + 2 H(+) = D-ribulose 1,5-bisphosphate + CO2 + H2O. It catalyses the reaction D-ribulose 1,5-bisphosphate + O2 = 2-phosphoglycolate + (2R)-3-phosphoglycerate + 2 H(+). In terms of biological role, ruBisCO catalyzes two reactions: the carboxylation of D-ribulose 1,5-bisphosphate, the primary event in carbon dioxide fixation, as well as the oxidative fragmentation of the pentose substrate in the photorespiration process. Both reactions occur simultaneously and in competition at the same active site. In Physcomitrium patens (Spreading-leaved earth moss), this protein is Ribulose bisphosphate carboxylase large chain.